The primary structure comprises 122 residues: Large ribosomal subunit protein uL14 (122 aa).

It belongs to the universal ribosomal protein uL14 family. In terms of assembly, part of the 50S ribosomal subunit. Forms a cluster with proteins L3 and L19. In the 70S ribosome, L14 and L19 interact and together make contacts with the 16S rRNA in bridges B5 and B8.

In terms of biological role, binds to 23S rRNA. Forms part of two intersubunit bridges in the 70S ribosome. This is Large ribosomal subunit protein uL14 from Trichlorobacter lovleyi (strain ATCC BAA-1151 / DSM 17278 / SZ) (Geobacter lovleyi).